A 633-amino-acid chain; its full sequence is Putative ankyrin repeat protein L774 (633 aa).

7 ANK repeats span residues 91 to 120, 123 to 152, 221 to 250, 252 to 275, 338 to 367, 369 to 393, and 517 to 546; these read IYGH…EYDP, NCDD…FFKI, NVNK…EYDF, TILK…ILDS, DYDV…DVNN, MTYA…TLST, and DNLK…NSND.

This chain is Putative ankyrin repeat protein L774, found in Acanthamoeba polyphaga mimivirus (APMV).